The chain runs to 107 residues: L-rhamnose mutarotase (107 aa).

Y21 lines the substrate pocket. H25 acts as the Proton donor in catalysis. Substrate is bound by residues Y44 and 79-80 (WW).

The protein belongs to the rhamnose mutarotase family. Homodimer.

Its subcellular location is the cytoplasm. It catalyses the reaction alpha-L-rhamnose = beta-L-rhamnose. Its pathway is carbohydrate metabolism; L-rhamnose metabolism. Its function is as follows. Involved in the anomeric conversion of L-rhamnose. This chain is L-rhamnose mutarotase, found in Agrobacterium fabrum (strain C58 / ATCC 33970) (Agrobacterium tumefaciens (strain C58)).